The primary structure comprises 292 residues: Peroxisomal 2,4-dienoyl-CoA reductase SPS19 [(3E)-enoyl-CoA-producing] (292 aa).

NADP(+)-binding residues include isoleucine 36, aspartate 85, and lysine 145. The active-site Proton donor is the serine 162. NADP(+) is bound at residue lysine 180. Lysine 180 acts as the Lowers pKa of active site Tyr in catalysis. Lysine 188 is covalently cross-linked (Glycyl lysine isopeptide (Lys-Gly) (interchain with G-Cter in ubiquitin)). An NADP(+)-binding site is contributed by isoleucine 209. The Microbody targeting signal motif lies at 290-292; the sequence is SKL.

This sequence belongs to the short-chain dehydrogenases/reductases (SDR) family. In terms of assembly, homodimer.

It localises to the peroxisome. The catalysed reaction is a (2E,4Z)-dienoyl-CoA + NADPH + H(+) = a 4,5-saturated-(3E)-enoyl-CoA + NADP(+). The enzyme catalyses a (2E,4E)-dienoyl-CoA + NADPH + H(+) = a 4,5-saturated-(3E)-enoyl-CoA + NADP(+). Its function is as follows. Auxiliary enzyme of beta-oxidation. Participates in the degradation of unsaturated fatty enoyl-CoA esters having double bonds in both even- and odd-numbered positions in peroxisome. Catalyzes the NADP-dependent reduction of 2,4-dienoyl-CoA to yield trans-3-enoyl-CoA. Dispensable for growth and sporulation on solid acetate and oleate media, but is essential for these processes to occur on petroselineate. This Saccharomyces cerevisiae (strain ATCC 204508 / S288c) (Baker's yeast) protein is Peroxisomal 2,4-dienoyl-CoA reductase SPS19 [(3E)-enoyl-CoA-producing] (SPS19).